Here is a 430-residue protein sequence, read N- to C-terminus: NADH-quinone oxidoreductase subunit D 1 (430 aa).

The interval 1–36 (MSEAKGVGGIDPRATPGSAGAGERPPMGTVSRAGDG) is disordered.

It belongs to the complex I 49 kDa subunit family. In terms of assembly, NDH-1 is composed of 14 different subunits. Subunits NuoB, C, D, E, F, and G constitute the peripheral sector of the complex.

Its subcellular location is the cell inner membrane. It catalyses the reaction a quinone + NADH + 5 H(+)(in) = a quinol + NAD(+) + 4 H(+)(out). In terms of biological role, NDH-1 shuttles electrons from NADH, via FMN and iron-sulfur (Fe-S) centers, to quinones in the respiratory chain. The immediate electron acceptor for the enzyme in this species is believed to be ubiquinone. Couples the redox reaction to proton translocation (for every two electrons transferred, four hydrogen ions are translocated across the cytoplasmic membrane), and thus conserves the redox energy in a proton gradient. This is NADH-quinone oxidoreductase subunit D 1 from Anaeromyxobacter dehalogenans (strain 2CP-C).